The chain runs to 1387 residues: Collagen-like protein 6 (1387 aa).

The N-linked (GlcNAc...) asparagine; by host glycan is linked to Asn-6. Collagen-like domains lie at 95–154 (GNNG…KGDI), 161–220 (GDKG…KGDN), 266–325 (GEKG…KGEM), 344–403 (GSKG…KGEK), 450–508 (IKGD…KGDI), and 512–751 (GEKG…SGSS). Disordered stretches follow at residues 98 to 219 (GNNG…DKGD), 268 to 422 (KGEI…QNQG), and 454 to 753 (KGEK…SSCQ). Composition is skewed to basic and acidic residues over residues 114-181 (IKGD…KGSK), 189-199 (SKGDNGDKGSK), 207-219 (SKGD…DKGD), 268-340 (KGEI…DGIK), 364-382 (KGDR…KGDN), 390-405 (SKGD…EKGE), 454-535 (KGEK…KGDI), and 544-747 (KGEK…DKGE). Asn-794, Asn-814, Asn-819, Asn-826, Asn-846, Asn-886, Asn-894, Asn-969, Asn-1032, Asn-1077, Asn-1123, Asn-1200, Asn-1224, Asn-1232, and Asn-1233 each carry an N-linked (GlcNAc...) asparagine; by host glycan.

May be hydroxylated on lysine by the viral-encoded procollagen-lysine,2-oxoglutarate 5-dioxygenase.

It is found in the virion. In terms of biological role, may participate in the formation of a layer of cross-linked glycosylated fibrils at the viral surface thus giving it a hairy-like appearance. The sequence is that of Collagen-like protein 6 from Acanthamoeba polyphaga mimivirus (APMV).